The chain runs to 499 residues: Glycerol kinase (499 aa).

T12 serves as a coordination point for ADP. 3 residues coordinate ATP: T12, T13, and S14. Position 12 (T12) interacts with sn-glycerol 3-phosphate. Residue R16 participates in ADP binding. R82, E83, Y134, and D240 together coordinate sn-glycerol 3-phosphate. Residues R82, E83, Y134, D240, and Q241 each contribute to the glycerol site. Positions 262 and 306 each coordinate ADP. ATP is bound by residues T262, G306, Q310, and G412. ADP is bound by residues G412 and N416.

It belongs to the FGGY kinase family.

The enzyme catalyses glycerol + ATP = sn-glycerol 3-phosphate + ADP + H(+). It functions in the pathway polyol metabolism; glycerol degradation via glycerol kinase pathway; sn-glycerol 3-phosphate from glycerol: step 1/1. Inhibited by fructose 1,6-bisphosphate (FBP). Functionally, key enzyme in the regulation of glycerol uptake and metabolism. Catalyzes the phosphorylation of glycerol to yield sn-glycerol 3-phosphate. The sequence is that of Glycerol kinase from Nocardia farcinica (strain IFM 10152).